Consider the following 633-residue polypeptide: Probable potassium transport system protein Kup 2 (633 aa).

The next 12 membrane-spanning stretches (helical) occupy residues 18-38, 61-81, 107-127, 143-163, 176-196, 211-231, 255-275, 293-313, 345-365, 371-391, 402-422, and 429-449; these read FVGLVVGAIGVVYGDIGTSPL, LISLMIWTLTIIVTFKYVLFL, VPVLFFAGLIGSALFIGDAMI, ITPAFAEYVPPLSAAIMIVLF, FFGPITVLWFFAMAAGGVIHI, ALSFLAHAGTVGLIVLGAVFL, WFVLVFPALLLNYLGQGALVL, ALLPVVLLATLATIIASQAVI, IYVPSVNLLLLTGVLMLIFSF, LATAYGISVTGAMVITTMLAF, FMLASAALLPLFVIEVVFLAA, and DGGWVPVALALAIMTLMWTWT.

Belongs to the HAK/KUP transporter (TC 2.A.72) family.

Its subcellular location is the cell inner membrane. It carries out the reaction K(+)(in) + H(+)(in) = K(+)(out) + H(+)(out). Transport of potassium into the cell. Likely operates as a K(+):H(+) symporter. This is Probable potassium transport system protein Kup 2 from Rhizobium etli (strain ATCC 51251 / DSM 11541 / JCM 21823 / NBRC 15573 / CFN 42).